We begin with the raw amino-acid sequence, 118 residues long: Cell division protein FtsB (118 aa).

The Cytoplasmic segment spans residues 1-6 (MRNWRW). The helical transmembrane segment at 7-24 (LLLVLAALLAWLQHRFWF) threads the bilayer. Residues 25-118 (GPGNSGEVRM…DLSQPRREKR (94 aa)) lie on the Periplasmic side of the membrane. Residues 30–66 (GEVRMLQVQIVQQHQENERLRQRNASLAAEVKNLKDG) adopt a coiled-coil conformation. Positions 98 to 118 (LPNDTSADHGVDLSQPRREKR) are disordered. Basic and acidic residues predominate over residues 103–118 (SADHGVDLSQPRREKR).

This sequence belongs to the FtsB family. As to quaternary structure, part of a complex composed of FtsB, FtsL and FtsQ.

Its subcellular location is the cell inner membrane. Its function is as follows. Essential cell division protein. May link together the upstream cell division proteins, which are predominantly cytoplasmic, with the downstream cell division proteins, which are predominantly periplasmic. This is Cell division protein FtsB from Xylella fastidiosa (strain M12).